Consider the following 232-residue polypeptide: Lipoprotein-releasing system ATP-binding protein LolD 2 (232 aa).

Residues 11–231 enclose the ABC transporter domain; it reads VYLHDIKRQY…SLQDGVVVEL (221 aa). 47–54 is a binding site for ATP; it reads APSGSGKS.

It belongs to the ABC transporter superfamily. Lipoprotein translocase (TC 3.A.1.125) family. In terms of assembly, the complex is composed of two ATP-binding proteins (LolD) and two transmembrane proteins (LolC and LolE).

The protein localises to the cell inner membrane. Functionally, part of the ABC transporter complex LolCDE involved in the translocation of mature outer membrane-directed lipoproteins, from the inner membrane to the periplasmic chaperone, LolA. Responsible for the formation of the LolA-lipoprotein complex in an ATP-dependent manner. In Rhodopseudomonas palustris (strain ATCC BAA-98 / CGA009), this protein is Lipoprotein-releasing system ATP-binding protein LolD 2.